We begin with the raw amino-acid sequence, 38 residues long: Large ribosomal subunit protein bL36 (38 aa).

This sequence belongs to the bacterial ribosomal protein bL36 family.

The protein is Large ribosomal subunit protein bL36 of Prochlorococcus marinus (strain MIT 9312).